A 149-amino-acid chain; its full sequence is Calmodulin (149 aa).

Position 2 is an N-acetylalanine (Ala-2). 4 consecutive EF-hand domains span residues 8 to 43 (EQIAEFKEAFSLFDKDGDGTITTKELGTVMRSLGQN), 44 to 79 (PTEAELQDMINEVDADGNGTIDFPEFLTMMARKMKD), 81 to 116 (DSEEEIREAFRVFDKDGNGFISAAELRHVMTNLGEK), and 117 to 149 (LTDEEVDEMIREADIDGDGQVNYEEFVTMMMSK). Ca(2+) is bound by residues Asp-21, Asp-23, Asp-25, Thr-27, Glu-32, Asp-57, Asp-59, Asn-61, Thr-63, Glu-68, Asp-94, Asp-96, Asn-98, and Glu-105. The residue at position 116 (Lys-116) is an N6,N6,N6-trimethyllysine. Asp-130, Asp-132, Asp-134, Gln-136, and Glu-141 together coordinate Ca(2+).

This sequence belongs to the calmodulin family.

Calmodulin mediates the control of a large number of enzymes, ion channels and other proteins by Ca(2+). Among the enzymes to be stimulated by the calmodulin-Ca(2+) complex are a number of protein kinases and phosphatases. The sequence is that of Calmodulin from Lumbricus rubellus (Humus earthworm).